The chain runs to 445 residues: Tubulin beta-1 chain (445 aa).

GTP-binding residues include Gln11, Glu69, Ser138, Gly142, Thr143, Gly144, Asn204, and Asn226. Glu69 lines the Mg(2+) pocket. The disordered stretch occupies residues 426-445 (QDATAEDEEEYEDEEEEMAA). Positions 429–445 (TAEDEEEYEDEEEEMAA) are enriched in acidic residues.

It belongs to the tubulin family. In terms of assembly, dimer of alpha and beta chains. A typical microtubule is a hollow water-filled tube with an outer diameter of 25 nm and an inner diameter of 15 nM. Alpha-beta heterodimers associate head-to-tail to form protofilaments running lengthwise along the microtubule wall with the beta-tubulin subunit facing the microtubule plus end conferring a structural polarity. Microtubules usually have 13 protofilaments but different protofilament numbers can be found in some organisms and specialized cells. The cofactor is Mg(2+).

The protein resides in the cytoplasm. The protein localises to the cytoskeleton. Its function is as follows. Tubulin is the major constituent of microtubules, a cylinder consisting of laterally associated linear protofilaments composed of alpha- and beta-tubulin heterodimers. Microtubules grow by the addition of GTP-tubulin dimers to the microtubule end, where a stabilizing cap forms. Below the cap, tubulin dimers are in GDP-bound state, owing to GTPase activity of alpha-tubulin. This Eleusine indica (Goosegrass) protein is Tubulin beta-1 chain (TUBB1).